We begin with the raw amino-acid sequence, 316 residues long: Cysteine synthase (316 aa).

2 residues coordinate hydrogen sulfide: N7 and R35. K42 bears the N6-(pyridoxal phosphate)lysine mark. Residues N72 and 177–181 each bind pyridoxal 5'-phosphate; that span reads GTGGS. L268 serves as a coordination point for hydrogen sulfide. S272 contacts pyridoxal 5'-phosphate.

It belongs to the cysteine synthase/cystathionine beta-synthase family. As to quaternary structure, homodimer. It depends on pyridoxal 5'-phosphate as a cofactor.

It carries out the reaction O-acetyl-L-serine + hydrogen sulfide = L-cysteine + acetate. The protein operates within amino-acid biosynthesis; L-cysteine biosynthesis; L-cysteine from L-serine: step 2/2. This is Cysteine synthase (cysK) from Haemophilus influenzae (strain ATCC 51907 / DSM 11121 / KW20 / Rd).